Reading from the N-terminus, the 1300-residue chain is ATP-dependent RNA helicase HrpA (1300 aa).

The 164-residue stretch at 87–250 folds into the Helicase ATP-binding domain; sequence LEAIRDHQVV…FNNAPIIEVS (164 aa). 100–107 is an ATP binding site; it reads GETGSGKT. Positions 197-200 match the DEAH box motif; sequence DEAH. The Helicase C-terminal domain maps to 274-444; the sequence is QLQAIFDAVD…SVILQMTALG (171 aa).

Belongs to the DEAD box helicase family. DEAH subfamily.

The enzyme catalyses ATP + H2O = ADP + phosphate + H(+). Its function is as follows. Not yet known. This Escherichia coli (strain K12) protein is ATP-dependent RNA helicase HrpA (hrpA).